Consider the following 341-residue polypeptide: uncharacterized protein (341 aa).

This is an uncharacterized protein from Methanocaldococcus jannaschii (strain ATCC 43067 / DSM 2661 / JAL-1 / JCM 10045 / NBRC 100440) (Methanococcus jannaschii).